The primary structure comprises 331 residues: Putative peptidyl-prolyl cis-trans isomerase RF_0616 (331 aa).

The segment at 28-50 is disordered; the sequence is NPTTIEQTASNNSSTDENQTSIN. A PPIase FKBP-type domain is found at 128–226; that stretch reads GHVVTVFYQI…NNEVKIYDDE (99 aa).

It carries out the reaction [protein]-peptidylproline (omega=180) = [protein]-peptidylproline (omega=0). This is Putative peptidyl-prolyl cis-trans isomerase RF_0616 from Rickettsia felis (strain ATCC VR-1525 / URRWXCal2) (Rickettsia azadi).